A 325-amino-acid polypeptide reads, in one-letter code: Alpha-cuprenene synthase COP6 (325 aa).

Residues Asp102, Glu166, Asn224, Ser228, and Glu232 each coordinate Mg(2+).

It belongs to the trichodiene synthase family. Mg(2+) is required as a cofactor.

Alpha-cuprenene synthase; part of the gene cluster that mediates the biosynthesis of alpha-cuprenene and oxidized derivatives. The alpha-cuprenene synthase COP6 is the only sesquiterpene synthase identified in C.cinereus that appears to be part of a biosynthetic gene cluster and is highly specific since it catalyzes the cyclization of (2E,6E)-farnesyl diphosphate into only one product, alpha-cuprenene. COP6 is also able to perform the cyclization of geranyl diphosphate. The cytochrome P450 monooxygenase COX2 then oxidizes the cyclohexadiene ring of alpha-cuprenene at positions 1 and 4, yielding first alpha-cuparene, followed by alpha-cuparophenol and a further yet unidentified compound resulting from one additional oxidation step. The cytochrome P450 monooxygenase COX1 then likely catalyzes the oxidation at position 9 of the pentane ring of alpha-cuprenene to give the corresponding hydroxy or ketone derivatives. This is Alpha-cuprenene synthase COP6 from Coprinopsis cinerea (strain Okayama-7 / 130 / ATCC MYA-4618 / FGSC 9003) (Inky cap fungus).